Here is a 431-residue protein sequence, read N- to C-terminus: Divergent protein kinase domain 1B (431 aa).

Topologically, residues 1-30 (MRRLRRLVHLVLLCPFSKGLQGRLPGLRVK) are cytoplasmic. The short motif at 5 to 6 (RR) is the May mediate ER retention element. The helical transmembrane segment at 31–51 (YVLLVWLGIFVGSWMVYVHYS) threads the bilayer. At 52–431 (SYSELCRGHV…WREISNTNYS (380 aa)) the chain is on the lumenal side. 2 disulfides stabilise this stretch: cysteine 57–cysteine 94 and cysteine 62–cysteine 117.

The protein belongs to the DIPK family. Post-translationally, among the many cysteines in the lumenal domain, most are probably involved in disulfide bonds.

It is found in the endoplasmic reticulum membrane. This Rattus norvegicus (Rat) protein is Divergent protein kinase domain 1B.